The following is a 425-amino-acid chain: Adenylosuccinate synthetase (425 aa).

GTP-binding positions include 12–18 and 40–42; these read GDEGKGK and GHT. Aspartate 13 serves as the catalytic Proton acceptor. Mg(2+) is bound by residues aspartate 13 and glycine 40. Residues 13–16, 38–41, threonine 127, arginine 141, glutamine 222, threonine 237, and arginine 301 each bind IMP; these read DEGK and NAGH. Histidine 41 (proton donor) is an active-site residue. 297–303 is a substrate binding site; sequence AVTGRPR. GTP-binding positions include arginine 303, 329–331, and 411–413; these read KID and SVG.

It belongs to the adenylosuccinate synthetase family. In terms of assembly, homodimer. Requires Mg(2+) as cofactor.

It localises to the cytoplasm. It carries out the reaction IMP + L-aspartate + GTP = N(6)-(1,2-dicarboxyethyl)-AMP + GDP + phosphate + 2 H(+). It participates in purine metabolism; AMP biosynthesis via de novo pathway; AMP from IMP: step 1/2. Functionally, plays an important role in the de novo pathway of purine nucleotide biosynthesis. Catalyzes the first committed step in the biosynthesis of AMP from IMP. This Fusobacterium nucleatum subsp. nucleatum (strain ATCC 25586 / DSM 15643 / BCRC 10681 / CIP 101130 / JCM 8532 / KCTC 2640 / LMG 13131 / VPI 4355) protein is Adenylosuccinate synthetase.